A 619-amino-acid chain; its full sequence is Interferon-activable protein 204 (619 aa).

The Pyrin domain maps to 1 to 88; that stretch reads MVNEYKRIVL…AEILKKERSE (88 aa). Positions 24-35 match the Nuclear export signal motif; it reads LFKSLLARDLNL. Residues 86–99 show a composition bias toward basic and acidic residues; sequence RSEVTGETSLEKNG. Positions 86-223 are disordered; the sequence is RSEVTGETSL…QNQNIPRGAV (138 aa). Low complexity predominate over residues 122-153; that stretch reads TSATQEETSTAQAGTSTAQARTSTAQAGTSTA. 3 tandem repeats follow at residues 134 to 140, 141 to 147, and 148 to 154. Residues 134–154 form a 3 X 7 AA tandem repeats of A-[GR]-T-S-T-A-Q region; that stretch reads AGTSTAQARTSTAQAGTSTAQ. The Nuclear localization signal motif lies at 150–157; that stretch reads TSTAQKRK. Positions 159–176 are enriched in basic and acidic residues; the sequence is MREEETGVKKSKAAKEPD. Over residues 190 to 206 the composition is skewed to low complexity; the sequence is SPILHSSSSASSNIPSA. Positions 207 to 218 are enriched in polar residues; the sequence is KNQKSQPQNQNI. HIN-200 domains are found at residues 213 to 413 and 417 to 615; these read PQNQ…IKIS and NVPK…MQVI. The interval 550–614 is interaction with ID2; the sequence is KKTERNKFIY…RSVRHSYMQV (65 aa).

It belongs to the HIN-200 family. As to quaternary structure, interacts with UBTF. Interacts with RUNX2. Interacts with ID1, ID2 and ID3. Interacts with STING. Acetylated upon bacterial infection, leading to translocation from nucleus to cytoplasm and subsequent recruitment of STING to activate IFN-beta production. Present in osteoblasts (at protein level).

The protein resides in the nucleus. Its subcellular location is the nucleolus. The protein localises to the cytoplasm. In terms of biological role, interferon-stimulated protein that plays a role in several biological processes including cell differentiation, autophagy and innate immunity. Cooperates with CGAS to sense dsDNA and activates the STING-dependent type I IFN pathway. Mechanistically, gets acetylated upon bacterial infection and then translocates from nucleus into cytoplasm to recruit STING for activation of TBK1-dependent IRF3 nuclear translocation and IFN-beta release. Inhibits the transcription of ribosomal RNA. May inhibit DNA binding by UBTF. Inhibits cell growth via p53/TP53 and RB1-dependent and independent pathways. Acts as a coactivator of RUNX2 during osteogenesis. May be involved in macrophage differentiation. Enables skeletal muscle and cardiac myocyte differentiation by sequestring Id proteins in the cytosol and promoting their ubiquitination and subsequent degradation. The chain is Interferon-activable protein 204 (Ifi204) from Mus musculus (Mouse).